The primary structure comprises 150 residues: Macrodomain Ter protein (150 aa).

This sequence belongs to the MatP family. As to quaternary structure, homodimer.

It is found in the cytoplasm. Required for spatial organization of the terminus region of the chromosome (Ter macrodomain) during the cell cycle. Prevents early segregation of duplicated Ter macrodomains during cell division. Binds specifically to matS, which is a 13 bp signature motif repeated within the Ter macrodomain. This chain is Macrodomain Ter protein, found in Escherichia coli (strain SMS-3-5 / SECEC).